We begin with the raw amino-acid sequence, 212 residues long: Cytidylate kinase (212 aa).

Position 7 to 15 (7 to 15 (GPAASGKGT)) interacts with ATP.

The protein belongs to the cytidylate kinase family. Type 1 subfamily.

The protein localises to the cytoplasm. The catalysed reaction is CMP + ATP = CDP + ADP. It carries out the reaction dCMP + ATP = dCDP + ADP. This Nitrobacter winogradskyi (strain ATCC 25391 / DSM 10237 / CIP 104748 / NCIMB 11846 / Nb-255) protein is Cytidylate kinase.